We begin with the raw amino-acid sequence, 545 residues long: Labda-7,13-dienyl diphosphate synthase (545 aa).

Positions 315–320 match the DXDDTA motif motif; that stretch reads DADDTA. An RXXDGSW motif motif is present at residues 444 to 450; the sequence is RRTDGSW. Residues 526–545 form a disordered region; sequence LPAPAPVPPGFDAARTGPAD.

The protein belongs to the terpene synthase family. The cofactor is Mg(2+).

It catalyses the reaction (2E,6E,10E)-geranylgeranyl diphosphate = (13E)-labda-7,13-dien-15-yl diphosphate. Involved in the biosynthesis of the labdane-type bicyclic diterpene labda-7,13(16),14-triene. Catalyzes the conversion of geranylgeranyl diphosphate (GGDP) into labda-7,13(E)-dienyl diphosphate. This is Labda-7,13-dienyl diphosphate synthase from Streptomyces clavuligerus.